We begin with the raw amino-acid sequence, 468 residues long: MLLCWIVSLLLATVGGKEVCYGHLGCFSNDKPWAGMLQRPLKIFPWSPEDIDTRFLLYTNENPNNYQKISATEPDTIKFSNFQLDRKTRFIVHGFIDKGEDGWLLDMCKKMFQVEKVNCICVDWRRGSRTEYTQASYNTRVVGAEIAFLVQVLSTEMGYSPENVHLIGHSLGAHVVGEAGRRLEGHVGRITGLDPAEPCFQGLPEEVRLDPSDAMFVDVIHTDSAPIIPYLGFGMSQKVGHLDFFPNGGKEMPGCQKNILSTIVDINGIWEGTQNFVACNHLRSYKYYASSILNPDGFLGYPCSSYEKFQQNDCFPCPEEGCPKMGHYADQFEGKTATVEQTVYLNTGDSGNFTRWRYKVSVTLSGAKKLSGYILVALYGNNGNSKQYEIFKGSLKPEARHVRDIDVDINVGEIQKVKFLWNNKVINLFRPTLGASQITVQSGVDGKEYNFCSSDTVREDVLQSLYPC.

Residues M1–G16 form the signal peptide. A disulfide bridge links C20 with C26. The required for galactolipase activity stretch occupies residues V92–L104. A disulfide bridge links C108 with C119. S170 (nucleophile) is an active-site residue. The active-site Charge relay system is the D194. Ca(2+)-binding residues include E205, R208, D210, and D213. Cysteines 255 and 279 form a disulfide. Residues Q256 to A278 form a required for galactolipase activity region. Catalysis depends on H281, which acts as the Charge relay system. 2 cysteine pairs are disulfide-bonded: C303-C314 and C317-C322. N-linked (GlcNAc...) asparagine glycans are attached at residues N352 and N427. One can recognise a PLAT domain in the interval W356–C468. A disulfide bond links C452 and C468.

It belongs to the AB hydrolase superfamily. Lipase family. Expressed in pancreatic acinar cells (at protein level).

It localises to the secreted. It is found in the zymogen granule membrane. Its subcellular location is the cell projection. The protein localises to the neuron projection. The catalysed reaction is a triacylglycerol + H2O = a diacylglycerol + a fatty acid + H(+). It catalyses the reaction a 1,2-diacyl-3-O-(beta-D-galactosyl)-sn-glycerol + 2 H2O = 3-beta-D-galactosyl-sn-glycerol + 2 a fatty acid + 2 H(+). The enzyme catalyses 1,2,3-tri-(9Z-octadecenoyl)-glycerol + H2O = di-(9Z)-octadecenoylglycerol + (9Z)-octadecenoate + H(+). It carries out the reaction di-(9Z)-octadecenoylglycerol + H2O = (9Z-octadecenoyl)-glycerol + (9Z)-octadecenoate + H(+). The catalysed reaction is (9Z-octadecenoyl)-glycerol + H2O = glycerol + (9Z)-octadecenoate + H(+). It catalyses the reaction 1-(9Z-octadecenoyl)-glycerol + H2O = glycerol + (9Z)-octadecenoate + H(+). The enzyme catalyses 1,2,3-tripropanoylglycerol + H2O = dipropanoylglycerol + propanoate + H(+). It carries out the reaction 1,2,3-tributanoylglycerol + H2O = dibutanoylglycerol + butanoate + H(+). The catalysed reaction is 1,2,3-trioctanoylglycerol + H2O = dioctanoylglycerol + octanoate + H(+). It catalyses the reaction 1,2-didecanoylglycerol + H2O = decanoylglycerol + decanoate + H(+). The enzyme catalyses long chain 1,2-diacyl-3-O-beta-D-galactosyl-sn-glycerol + H2O = long chain acyl-3-O-beta-D-galactosyl-sn-glycerol + a fatty acid + H(+). It carries out the reaction 1,2-dioctanoyl-3-O-beta-D-galactosyl-sn-glycerol + H2O = octanoyl-3-(beta-D-galactosyl)-sn-glycerol + octanoate + H(+). The catalysed reaction is 1,2-didodecanoyl-3-beta-D-galactosyl-sn-glycerol + H2O = dodecanoyl-3-beta-D-galactosyl-sn-glycerol + dodecanoate + H(+). It catalyses the reaction 1-beta-D-galactosyl-2,3-didodecanoyl-sn-glycerol + H2O = 1-beta-D-galactosyl-dodecanoyl-sn-glycerol + dodecanoate + H(+). The enzyme catalyses a 1,2-diacyl-3-O-[alpha-D-galactosyl-(1-&gt;6)-beta-D-galactosyl]-sn-glycerol + H2O = acyl-3-O-[alpha-D-galactosyl-(1-&gt;6)-beta-D-galactosyl]-sn-glycerol + a fatty acid + H(+). It carries out the reaction long chain 1,2-diacyl-3-O-[alpha-D-galactosyl-(1-&gt;6)-beta-D-galactosyl]-sn-glycerol + H2O = long chain acyl-3-O-[alpha-D-galactosyl-(1-&gt;6)-beta-D-galactosyl]-sn-glycerol + a fatty acid + H(+). The catalysed reaction is 1,2-dioctanoyl-3-O-[alpha-D-galactosyl-(1-&gt;6)-beta-D-galactosyl]-sn-glycerol + H2O = octanoyl-3-O-[alpha-D-galactosyl-(1-&gt;6)-beta-D-galactosyl]-sn-glycerol + octanoate + H(+). It catalyses the reaction 1,2-didodecanoyl-3-O-[alpha-D-galactosyl-(1-&gt;6)-beta-D-galactosyl]-sn-glycerol + H2O = dodecanoyl-3-O-[alpha-D-galactosyl-(1-&gt;6)-beta-D-galactosyl]-sn-glycerol + dodecanoate + H(+). The enzyme catalyses a 1,2-diacyl-sn-glycero-3-phosphocholine + H2O = a monoacyl-sn-glycero-3-phosphocholine + a fatty acid + H(+). The protein operates within glycerolipid metabolism; triacylglycerol degradation. Its pathway is glycolipid metabolism. With respect to regulation, CLPS stimulates triacylglycerol lipase activity. Triacylglycerol lipase activity is not inhibited by increasing bile salt concentration. In terms of biological role, lipase that primarily hydrolyzes triglycerides and galactosylglycerides. In neonates, may play a major role in pancreatic digestion of dietary fats such as milk fat globules enriched in long-chain triglycerides. Hydrolyzes short-, medium- and long-chain fatty acyls in triglycerides without apparent positional specificity. Can completely deacylate triacylglycerols. When the liver matures and bile salt synthesis increases, likely functions mainly as a galactolipase and monoacylglycerol lipase. Hydrolyzes monogalactosyldiglycerols (MGDG) and digalactosyldiacylglycerols (DGDG) present in a plant-based diet, releasing long-chain polyunsaturated fatty acids. Hydrolyzes medium- and long-chain fatty acyls in galactolipids. May act together with LIPF to hydrolyze partially digested triglycerides. Hydrolyzes long-chain monoglycerides with high efficiency. In cytotoxic T cells, contributes to perforin-dependent cell lysis, but is unlikely to mediate direct cytotoxicity. Also has low phospholipase activity. In neurons, required for the localization of the phospholipid 1-oleoyl-2-palmitoyl-PC (OPPC) to neurite tips through acyl chain remodeling of membrane phospholipids. The resulting OPPC-rich lipid membrane domain recruits the t-SNARE protein STX4 by selectively interacting with the STX4 transmembrane domain and this promotes surface expression of the dopamine transporter SLC6A3/DAT at neurite tips by facilitating fusion of SLC6A3-containing transport vesicles with the plasma membrane. This Rattus norvegicus (Rat) protein is Pancreatic lipase-related protein 2.